Reading from the N-terminus, the 165-residue chain is S-ribosylhomocysteine lyase (165 aa).

3 residues coordinate Fe cation: His54, His58, and Cys128.

It belongs to the LuxS family. As to quaternary structure, homodimer. It depends on Fe cation as a cofactor.

The enzyme catalyses S-(5-deoxy-D-ribos-5-yl)-L-homocysteine = (S)-4,5-dihydroxypentane-2,3-dione + L-homocysteine. In terms of biological role, involved in the synthesis of autoinducer 2 (AI-2) which is secreted by bacteria and is used to communicate both the cell density and the metabolic potential of the environment. The regulation of gene expression in response to changes in cell density is called quorum sensing. Catalyzes the transformation of S-ribosylhomocysteine (RHC) to homocysteine (HC) and 4,5-dihydroxy-2,3-pentadione (DPD). The sequence is that of S-ribosylhomocysteine lyase from Helicobacter hepaticus (strain ATCC 51449 / 3B1).